A 399-amino-acid polypeptide reads, in one-letter code: Alpha-ketoglutarate-dependent dioxygenase fc-dox (399 aa).

Histidine 158 and aspartate 160 together coordinate Fe cation. Threonine 203 is a binding site for 2-oxoglutarate. Histidine 355 serves as a coordination point for Fe cation. Arginine 367 contacts 2-oxoglutarate. The interval 371–399 (QGWLAGDRPPKGPVPIPDPRARSSIYYQK) is disordered.

This sequence belongs to the TfdA dioxygenase family. It depends on Fe(2+) as a cofactor.

It functions in the pathway mycotoxin biosynthesis. Its function is as follows. Alpha-ketoglutarate-dependent dioxygenase; part of the 2 gene clusters that mediate the biosynthesis of fusicoccins, diterpene glucosides that display phytohormone-like activity and function as potent activators of plasma membrane H(+)-ATPases in plants by modifying 14-3-3 proteins and cause the plant disease constriction canker. The first step in the pathway is performed by the fusicoccadiene synthase PaFS that possesses both prenyl transferase and terpene cyclase activity, converting isopentenyl diphosphate and dimethylallyl diphosphate into geranylgeranyl diphosphate (GGDP) and successively converting GGDP into fusicocca-2,10(14)-diene, a precursor for fusicoccin H. The second step is the oxidation at the C-8 position by the cytochrome P450 monooxygenase PaP450-2 to yield fusicocca-2,10(14)-diene-8-beta-ol. The cytochrome P450 monooxygenase PaP450-1 then catalyzes the hydroxylation at the C-16 position to produce fusicocca-2,10(14)-diene-8-beta,16-diol. The dioxygenase fc-dox then catalyzes the 16-oxydation of fusicocca-2,10(14)-diene-8-beta,16-diol to yield an aldehyde (8-beta-hydroxyfusicocca-1,10(14)-dien-16-al). The short-chain dehydrogenase/reductase fc-sdr catalyzes the reduction of the aldehyde to yield fusicocca-1,10(14)-diene-8-beta,16-diol. The next step is the hydroxylation at C-9 performed by the cytochrome P450 monooxygenase PaP450-3 that leads to fusicoccin H aglycon which is glycosylated to fusicoccin H by the O-glycosyltransferase PaGT. Hydroxylation at C-12 by the cytochrome P450 monooxygenase PaP450-4 leads then to the production of fusicoccin Q and is followed by methylation by the O-methyltransferase PaMT to yield fusicoccin P. Fusicoccin P is further converted to fusicoccin J via prenylation by the O-glucose prenyltransferase PaPT. Cytochrome P450 monooxygenase PaP450-5 then performs hydroxylation at C-19 to yield dideacetyl-fusicoccin A which is acetylated to 3'-O-deacetyl-fusicoccin A by the O-acetyltransferase PaAT-2. Finally, a another acetylation by the O-acetyltransferase PaAT-1 yields fusicoccin A. This Phomopsis amygdali (Fusicoccum amygdali) protein is Alpha-ketoglutarate-dependent dioxygenase fc-dox.